Consider the following 351-residue polypeptide: Heat-inducible transcription repressor HrcA (351 aa).

The protein belongs to the HrcA family.

Its function is as follows. Negative regulator of class I heat shock genes (grpE-dnaK-dnaJ and groELS operons). Prevents heat-shock induction of these operons. The chain is Heat-inducible transcription repressor HrcA from Acetivibrio thermocellus (strain ATCC 27405 / DSM 1237 / JCM 9322 / NBRC 103400 / NCIMB 10682 / NRRL B-4536 / VPI 7372) (Clostridium thermocellum).